We begin with the raw amino-acid sequence, 258 residues long: Deoxyribose-phosphate aldolase (258 aa).

Residue Asp102 is the Proton donor/acceptor of the active site. The Schiff-base intermediate with acetaldehyde role is filled by Lys165. Lys199 serves as the catalytic Proton donor/acceptor.

The protein belongs to the DeoC/FbaB aldolase family. DeoC type 2 subfamily.

The protein localises to the cytoplasm. The enzyme catalyses 2-deoxy-D-ribose 5-phosphate = D-glyceraldehyde 3-phosphate + acetaldehyde. It functions in the pathway carbohydrate degradation; 2-deoxy-D-ribose 1-phosphate degradation; D-glyceraldehyde 3-phosphate and acetaldehyde from 2-deoxy-alpha-D-ribose 1-phosphate: step 2/2. Functionally, catalyzes a reversible aldol reaction between acetaldehyde and D-glyceraldehyde 3-phosphate to generate 2-deoxy-D-ribose 5-phosphate. This chain is Deoxyribose-phosphate aldolase, found in Vibrio campbellii (strain ATCC BAA-1116).